We begin with the raw amino-acid sequence, 170 residues long: Small ribosomal subunit protein uS5 (170 aa).

Residues 12-75 (WSELLVSVRR…NAAKKSMIRV (64 aa)) enclose the S5 DRBM domain.

It belongs to the universal ribosomal protein uS5 family. In terms of assembly, part of the 30S ribosomal subunit. Contacts proteins S4 and S8.

Functionally, with S4 and S12 plays an important role in translational accuracy. Its function is as follows. Located at the back of the 30S subunit body where it stabilizes the conformation of the head with respect to the body. This is Small ribosomal subunit protein uS5 from Wolbachia sp. subsp. Brugia malayi (strain TRS).